The following is a 186-amino-acid chain: Ribosome-recycling factor (186 aa).

This sequence belongs to the RRF family.

The protein resides in the cytoplasm. Its function is as follows. Responsible for the release of ribosomes from messenger RNA at the termination of protein biosynthesis. May increase the efficiency of translation by recycling ribosomes from one round of translation to another. This Polynucleobacter asymbioticus (strain DSM 18221 / CIP 109841 / QLW-P1DMWA-1) (Polynucleobacter necessarius subsp. asymbioticus) protein is Ribosome-recycling factor.